The chain runs to 449 residues: DNA-directed RNA polymerase subunit Rpo1C (449 aa).

Residues 1-68 (MQDVIKKIED…EGEELLKAVE (68 aa)) are unknown. Residues 69–449 (DEYLRILKVR…TGSVSVIMKK (381 aa)) are DNA-directed RNA polymerase subunit Rpo1C.

The protein belongs to the RNA polymerase beta' chain family. As to quaternary structure, part of the RNA polymerase complex.

It localises to the cytoplasm. The catalysed reaction is RNA(n) + a ribonucleoside 5'-triphosphate = RNA(n+1) + diphosphate. Its function is as follows. DNA-dependent RNA polymerase (RNAP) catalyzes the transcription of DNA into RNA using the four ribonucleoside triphosphates as substrates. Forms part of the jaw domain. The chain is DNA-directed RNA polymerase subunit Rpo1C from Methanothermobacter thermautotrophicus (strain Winter) (Methanobacterium thermoautotrophicum).